A 240-amino-acid polypeptide reads, in one-letter code: Pyridoxine 5'-phosphate synthase (240 aa).

A 3-amino-2-oxopropyl phosphate-binding site is contributed by Asn7. 9–10 (DH) is a 1-deoxy-D-xylulose 5-phosphate binding site. 3-amino-2-oxopropyl phosphate is bound at residue Arg18. The active-site Proton acceptor is His43. 2 residues coordinate 1-deoxy-D-xylulose 5-phosphate: Arg45 and His50. Glu70 acts as the Proton acceptor in catalysis. Thr100 contributes to the 1-deoxy-D-xylulose 5-phosphate binding site. The Proton donor role is filled by His191. 3-amino-2-oxopropyl phosphate-binding positions include Gly192 and 213–214 (GH).

This sequence belongs to the PNP synthase family. Homooctamer; tetramer of dimers.

It is found in the cytoplasm. It catalyses the reaction 3-amino-2-oxopropyl phosphate + 1-deoxy-D-xylulose 5-phosphate = pyridoxine 5'-phosphate + phosphate + 2 H2O + H(+). It participates in cofactor biosynthesis; pyridoxine 5'-phosphate biosynthesis; pyridoxine 5'-phosphate from D-erythrose 4-phosphate: step 5/5. Catalyzes the complicated ring closure reaction between the two acyclic compounds 1-deoxy-D-xylulose-5-phosphate (DXP) and 3-amino-2-oxopropyl phosphate (1-amino-acetone-3-phosphate or AAP) to form pyridoxine 5'-phosphate (PNP) and inorganic phosphate. The protein is Pyridoxine 5'-phosphate synthase of Trichodesmium erythraeum (strain IMS101).